Here is a 425-residue protein sequence, read N- to C-terminus: Formyl-CoA:oxalate CoA-transferase (425 aa).

Residues 17–18 (QS), arginine 38, 72–75 (LDTK), 96–98 (NFG), arginine 104, and 136–139 (KVYE) contribute to the CoA site. Residue aspartate 168 is the Nucleophile of the active site. Residue 247 to 249 (GGQ) coordinates substrate.

Belongs to the CoA-transferase III family. Frc subfamily. As to quaternary structure, homodimer.

The enzyme catalyses formyl-CoA + oxalate = oxalyl-CoA + formate. It functions in the pathway metabolic intermediate degradation; oxalate degradation; CO(2) and formate from oxalate: step 1/2. Functionally, involved in the catabolism of oxalate and in the adapatation to low pH via the induction of the oxalate-dependent acid tolerance response (ATR). Catalyzes the transfer of the CoA moiety from formyl-CoA to oxalate. The sequence is that of Formyl-CoA:oxalate CoA-transferase from Rhodopseudomonas palustris (strain BisA53).